Consider the following 543-residue polypeptide: Cytochrome P450 monooxygenase CYP1 (543 aa).

A helical transmembrane segment spans residues 40-60; the sequence is SSFFTRILIAFIGLCLLSIFS. Asn-210 and Asn-367 each carry an N-linked (GlcNAc...) asparagine glycan. Cys-478 contributes to the heme binding site. A glycan (N-linked (GlcNAc...) asparagine) is linked at Asn-517.

Belongs to the cytochrome P450 family. Heme serves as cofactor.

It is found in the membrane. The protein operates within secondary metabolite biosynthesis. In terms of biological role, cytochrome P450 monooxygenase; part of the gene cluster that mediates the biosynthesis of a tyrosine-derived cytochalasan acting as a fungal signal recognized by resistant rice plants and leads to avirulence in Pi33 resistant rice cultivars. The first step in the pathway is catalyzed by the hybrid PKS-NRPS ACE1, assisted by the enoyl reductase RAP1, that are responsible for fusion of the tyrosine precursor and the polyketide backbone. The polyketide synthase module (PKS) of ACE1 is responsible for the synthesis of the polyketide backbone and the downstream nonribosomal peptide synthetase (NRPS) amidates the carboxyl end of the polyketide with the tyrosine precursor. Because ACE1 lacks a designated enoylreductase (ER) domain, the required activity is provided the enoyl reductase RAP1. Reduction by the hydrolyase ORFZ, followed by dehydration and intra-molecular Diels-Alder cyclization by the Diels-Alderase ORF3 then yield the required isoindolone-fused macrocycle. A number of oxidative steps catalyzed by the tailoring enzymes identified within the cluster, including cytochrome P450 monooxygenases CYP1 to CYP4, the FAD-linked oxidoreductase OXR2 and the short-chain dehydrogenase/reductase OXR1, are further required to afford the final cytochalasans that confer avirulence and which have still to be identified. The monooxygenase CYP1 has been shown to be a site-selective C-18 hydroxylase whereas the function of CYP3 is the site-selective epoxidation of the C-6/C-7 olefin that is present in some intermediate compounds. Finally, SYN2 and RAP2 are not required for avirulence in Pi33 resistant rice cultivars. The sequence is that of Cytochrome P450 monooxygenase CYP1 from Pyricularia oryzae (strain 70-15 / ATCC MYA-4617 / FGSC 8958) (Rice blast fungus).